We begin with the raw amino-acid sequence, 692 residues long: uncharacterized protein (692 aa).

2 Response regulatory domains span residues 9–130 (RVLY…LRMC) and 139–255 (RILI…EYRM). 4-aspartylphosphate is present on residues Asp-58 and Asp-188. In terms of domain architecture, GGDEF spans 299–432 (GVHGLVIIDV…GGNQAHVWSA (134 aa)). Residues 443 to 691 (ESVIKRLVST…SFDFQHMSHD (249 aa)) form the EAL domain.

This is an uncharacterized protein from Thiocystis violacea.